Consider the following 216-residue polypeptide: Protein Syd (216 aa).

The protein belongs to the Syd family.

Its subcellular location is the cell inner membrane. Interacts with the SecY protein in vivo. May bind preferentially to an uncomplexed state of SecY, thus functioning either as a chelating agent for excess SecY in the cell or as a regulatory factor that negatively controls the translocase function. The sequence is that of Protein Syd from Shewanella sp. (strain MR-4).